The following is a 1903-amino-acid chain: MAFHNRRWNFTFSCCVVVLLLPLVAARPQQPSAATRVHEEYSTFRVENTEWTFNHLAVDHRNGNVYLGAVNRIYKLSPGLDIQVSHQTGPDEDNRNCYPPRIVQPCSEPLTLTNNVNKMLLMDYRENRLLACGSLYQGICKLLRLDDLFKLGEPFHKKEHYLSGVNESGSVFGVIVSYGDASPDKLFVATAVDGRPEYFPTISSRKLTRNSEEDGMFAYVFHDEFVASMIKIPSDTFTVVPDFDIYYVYGFSSGNFVYFLTLQPEMGGGPTTGSSSAGREQVYTSKLVRLCKDDTAFNSYVEVPLGCVKGGVEYRLLQAAYLSKAGTILARSLGIGPDDDILYAVFSKGQKRRPKESSQESALCVFTLKEINERIKDRLQSCYKGEGTLDLAWLKVKDISCSSALLTIDDNFCGLDMNAPLGVSEMVRGIPLFSESKDKMTSVIAYVYKNHSLAFVGTRGGRLKKIRVDGPTYGALQYETIQVVDNGPILRDMAFSSDQHFLYVMSESQLTRVPVEACEQYSSCNECLGSGDPHCGWCVLHSMCTRKEKCERSSEPRRFASNIKQCVRLSVHPNNISVSQYSVMLVLEAHNVPELSAGVNCTFEDLAEMDGLVEGNRITCSSPAEKEVPRIIVDQGDHQIVQLYLKSKETGLAFANTSFVFYNCSVHKSCLSCVGSPYQCHWCKYRHTCTHDPSSCSFQEGRVKQPEECPQLLPADRILVPVNVVKPITLRAKNLPQPQSGQRGYECVLTIQGVEQRVPALRFNSSSVQCQNTSYMYDGMEMSSLPVDLTVIWNGDFSIDNPAQNKVHLYKCDARRESCGLCLKADPLFGCVWCKGENRCSLKQHCSYPQSMWLEHNGINSKCTHPRITKITPLRGPREGGTLVTIRGENLGLEFSEIKDHVKVADVECTPVPEGYIPAEQIVCEMGKAERSQFAGNVQVCVGECRPEFMAKSSKYYYFVIPQLLSLKPSRGPISGGTIVNITGGNLDAGSNVSIMFKDQKCTYQRRGGQWITCRSHASMQGYGNVSVSVYVDKAHIHKDLKFEYVEDPTITKLEPEWSIFSGNTPLTVSGTNLDIIHTPLIRAKYKNLETINICQVLSPTTMQCMAPELPYSISKHKDVPERPDEFGFILDNVQSVLALNNTNFVYYPNPVFEPLSVSGVQELKPGSPIILKGRNFLPPTPGGNGKLNYTVLIGDKPCALTVSDTQLLCESPNLTGRHKVLARVGGIEFSPGVVHITSDSPLSSTAVISIAGAGGLLIFFIVIVLIAYKRKSRESDLTLKRLQMQMDNLESRVALECKEAFAELQTDIHELTSDLDGAGIPFLDYRTYTMRVLFPGIEEHPVLRDLEVPGYRQEQVEKGLKLFGQLINNKVFLLSFIRTLESQRGFSMRDRGNVASLIMTVLQSKLEYATDVLKHLLSDLIDKNLESKNHPKLLLRRTESVAEKMLTNWFTFLLYKFLKECAGEPLFSLFCAIKQQMEKGPIDSITGEARYSLSEDKLIRQQIDYKTLVVNCMHPDNEKSPEVQVKVLNCDTVSQVKEKILDAIYKNVPYSHRPKASDMDLEWRQGRVVRVILQDEDVTTKIEADWKRLNMLSHYQVTDNAVVALVPKQVTAYNSVNNSTVSRTSASKYENMIKYTGSPDSLRSRTPMITPDLESGVKVWHLVKNHEHGDQKEGDRGSKMVSEIYLTRLLATKGTLQKFVDDLFETIFSTAHRGSALPLAIKYMFDFLDEQADKHNIHDPHVRHTWKSNCLPLRFWVNVIKNPQFVFDIHKSSITDACLSVVAQTFMDSCSTSEHRLGKDSPSNKLLYAKDIPSYKSWVERYYSDISKMPAISDQDMNAYLAEQSRMHMNEFNTMSSLSEIYSYIGKYTEEIVSALEQDDGARKQRLAYKLEQVVAFMSLES.

An N-terminal signal peptide occupies residues 1 to 26 (MAFHNRRWNFTFSCCVVVLLLPLVAA). A Sema domain is found at 27–515 (RPQQPSAATR…SESQLTRVPV (489 aa)). At 27–1246 (RPQQPSAATR…ITSDSPLSST (1220 aa)) the chain is on the extracellular side. Intrachain disulfides connect C97–C106 and C132–C140. N-linked (GlcNAc...) asparagine glycosylation is present at N166. Intrachain disulfides connect C291/C413, C307/C364, and C382/C401. An N-linked (GlcNAc...) asparagine glycan is attached at N450. Residues 517-567 (ACEQYSSCNECLGSGDPHCGWCVLHSMCTRKEKCERSSEPRRFASNIKQCV) form the PSI 1 domain. 4 cysteine pairs are disulfide-bonded: C518–C535, C524–C566, C527–C544, and C538–C550. N575 and N600 each carry an N-linked (GlcNAc...) asparagine glycan. An intrachain disulfide couples C601 to C620. N-linked (GlcNAc...) asparagine glycans are attached at residues N656, N663, N764, and N772. The 48-residue stretch at 663 to 710 (NCSVHKSCLSCVGSPYQCHWCKYRHTCTHDPSSCSFQEGRVKQPEECP) folds into the PSI 2 domain. One can recognise a PSI 3 domain in the interval 811-864 (KCDARRESCGLCLKADPLFGCVWCKGENRCSLKQHCSYPQSMWLEHNGINSKCT). 4 consecutive IPT/TIG domains span residues 866-960 (PRIT…YYFV), 962-1046 (PQLL…FEYV), 1049-1148 (PTIT…FVYY), and 1151-1246 (PVFE…LSST). N-linked (GlcNAc...) asparagine glycosylation is found at N981, N992, N1025, N1141, N1189, and N1214. A helical membrane pass occupies residues 1247–1267 (AVISIAGAGGLLIFFIVIVLI). At 1268-1903 (AYKRKSRESD…QVVAFMSLES (636 aa)) the chain is on the cytoplasmic side.

The protein belongs to the plexin family.

The protein resides in the cell membrane. Involved in the development of primary sensory neurons especially in branching of the peripheral axons. Interacts with the SLIT2 signaling specifically to promote axonal branching of Rohon-Beard neurons and the trigeminal sensory ganglion neurons. The sequence is that of Plexin-A4 (plxna4) from Danio rerio (Zebrafish).